The primary structure comprises 311 residues: Glutaminase (311 aa).

Ser66, Asn116, Glu162, Asn169, Tyr193, Tyr245, and Val263 together coordinate substrate.

The protein belongs to the glutaminase family. In terms of assembly, homotetramer.

The enzyme catalyses L-glutamine + H2O = L-glutamate + NH4(+). This chain is Glutaminase, found in Rhodopseudomonas palustris (strain HaA2).